Here is a 339-residue protein sequence, read N- to C-terminus: Dihydroorotate dehydrogenase (quinone) (339 aa).

FMN contacts are provided by residues 64-68 (AGADK) and Thr88. Lys68 contributes to the substrate binding site. Substrate is bound at residue 113–117 (NRNGF). Residues Asn141 and Asn174 each coordinate FMN. Asn174 lines the substrate pocket. Ser177 acts as the Nucleophile in catalysis. Asn179 contributes to the substrate binding site. Positions 219 and 247 each coordinate FMN. Residue 248–249 (NT) participates in substrate binding. FMN contacts are provided by residues Gly270, Gly299, and 320-321 (YS).

This sequence belongs to the dihydroorotate dehydrogenase family. Type 2 subfamily. In terms of assembly, monomer. Requires FMN as cofactor.

The protein resides in the cell membrane. It carries out the reaction (S)-dihydroorotate + a quinone = orotate + a quinol. Its pathway is pyrimidine metabolism; UMP biosynthesis via de novo pathway; orotate from (S)-dihydroorotate (quinone route): step 1/1. Its function is as follows. Catalyzes the conversion of dihydroorotate to orotate with quinone as electron acceptor. This chain is Dihydroorotate dehydrogenase (quinone), found in Haemophilus influenzae (strain PittEE).